The following is a 613-amino-acid chain: MAEAKTHWLGAVLSLIPLIFLLSEAEAASFQRNQLLQKEPDLRLENVQRFPSPEMIRALEYIEKLRQQAHKEESSPDYNPYQGVSVPLQQKENGDLPESSRDSLSEDEWMKIIAEALRQAENEPQSAPKENKPYTLNSEKNFPMDMPDDYETQQWAERKLKHMRFPPMYEENSRDNPFKRTNEIVEEQYTPQNLATLESVFQELGKLTGPNSQKRERADEEQKLYTDDEDDIYKANNIAYEDVVGGEDWNPVEEKIESQTQEEVRDSKENADKTEQINDEMKRSGQLGLQDEDLRKESKDQLSDDVSKVITYLKRLVNAAGSGRSQNGQTGERAIRLFEKPLDPQSIYQLIEISRNLQIPPEDLIDMLKTGEKPVEPEQELEIPVEPEDISEVDLDHPDLFQNKMLSKNGYPKAPGHAVAEALSEGLSVEDILNLLGMESAANPKPPYFPNQYNREKVLSRLPYGPGRSKANQLPKAVWMPDVENRQMAYENLNDKDQELGEYLARMLVKYPEIMNANPAKRVPSQGSTEDDRQDENQIEQALKEHLSQHSSQETDKLASVSKRLPVGTPKSDDTPNRPYLDEDLLVKVLEYLNQEKAEKGREHIAKRAMENM.

The first 27 residues, 1-27 (MAEAKTHWLGAVLSLIPLIFLLSEAEA), serve as a signal peptide directing secretion. Positions 28–30 (ASF) are excised as a propeptide. Disordered regions lie at residues 67–105 (QQAH…DSLS) and 119–146 (QAEN…PMDM). Positions 92 to 105 (ENGDLPESSRDSLS) are enriched in basic and acidic residues. The residue at position 150 (Tyr-150) is a Sulfotyrosine. Phosphoserine is present on residues Ser-173, Ser-267, Ser-428, Ser-528, Ser-551, and Ser-552. Residues 257–283 (ESQTQEEVRDSKENADKTEQINDEMKR) are compositionally biased toward basic and acidic residues. The interval 257-287 (ESQTQEEVRDSKENADKTEQINDEMKRSGQL) is disordered. Over residues 546-557 (HLSQHSSQETDK) the composition is skewed to basic and acidic residues. Positions 546–580 (HLSQHSSQETDKLASVSKRLPVGTPKSDDTPNRPY) are disordered.

The protein belongs to the chromogranin/secretogranin protein family. As to quaternary structure, interacts with Secretogranin III/SCG3. In terms of tissue distribution, highest levels detected in anterior pituitary followed by adrenal medulla and posterior pituitary (at protein level). In the brain, high levels are found in the hypothalamus, comparable to those present in posterior pituitary with two- to six-fold lower levels present in the other brain regions investigated including caudate nucleus, hippocampus, thalamus and brainstem (at protein level).

It is found in the secreted. Functionally, neuroendocrine protein of the granin family that regulates the biogenesis of secretory granules. The chain is Secretogranin-2 (SCG2) from Bos taurus (Bovine).